We begin with the raw amino-acid sequence, 442 residues long: D-inositol 3-phosphate glycosyltransferase (442 aa).

His26 is a 1D-myo-inositol 3-phosphate binding site. UDP-N-acetyl-alpha-D-glucosamine contacts are provided by residues 32 to 33 (QP) and Gly40. 1D-myo-inositol 3-phosphate is bound by residues 37–42 (DAGGMN), Lys95, Tyr128, Thr152, and Arg172. UDP-N-acetyl-alpha-D-glucosamine is bound by residues Arg246, Lys251, and Gln304. The Mg(2+) site is built by Tyr313, Arg314, and Ala316. Glu326 and Glu334 together coordinate UDP-N-acetyl-alpha-D-glucosamine. Thr340 is a Mg(2+) binding site.

The protein belongs to the glycosyltransferase group 1 family. MshA subfamily. As to quaternary structure, homodimer.

The catalysed reaction is 1D-myo-inositol 3-phosphate + UDP-N-acetyl-alpha-D-glucosamine = 1D-myo-inositol 2-acetamido-2-deoxy-alpha-D-glucopyranoside 3-phosphate + UDP + H(+). Catalyzes the transfer of a N-acetyl-glucosamine moiety to 1D-myo-inositol 3-phosphate to produce 1D-myo-inositol 2-acetamido-2-deoxy-glucopyranoside 3-phosphate in the mycothiol biosynthesis pathway. This is D-inositol 3-phosphate glycosyltransferase from Mycolicibacterium gilvum (strain PYR-GCK) (Mycobacterium gilvum (strain PYR-GCK)).